The sequence spans 218 residues: Small ribosomal subunit protein uS5 (218 aa).

One can recognise an S5 DRBM domain in the interval 66 to 129 (LKQELLNVNL…REAKLNLVPV (64 aa)).

It belongs to the universal ribosomal protein uS5 family. Part of the 30S ribosomal subunit. Contacts protein S4.

In terms of biological role, with S4 and S12 plays an important role in translational accuracy. The chain is Small ribosomal subunit protein uS5 from Pyrobaculum aerophilum (strain ATCC 51768 / DSM 7523 / JCM 9630 / CIP 104966 / NBRC 100827 / IM2).